The sequence spans 188 residues: Large ribosomal subunit protein eL18 (188 aa).

Lys-119 is covalently cross-linked (Glycyl lysine isopeptide (Lys-Gly) (interchain with G-Cter in SUMO2)). Ser-130 is subject to Phosphoserine. Residues 150–188 (RHFGKAPGTPHSHTKPYVRSKGRKFERARGRRASRGYKN) form a disordered region. The residue at position 158 (Thr-158) is a Phosphothreonine. Composition is skewed to basic residues over residues 161 to 171 (SHTKPYVRSKG) and 178 to 188 (RGRRASRGYKN). Residue Lys-164 forms a Glycyl lysine isopeptide (Lys-Gly) (interchain with G-Cter in SUMO2) linkage.

Belongs to the eukaryotic ribosomal protein eL18 family. In terms of assembly, component of the large ribosomal subunit.

Its subcellular location is the cytoplasm. It localises to the cytosol. The protein localises to the rough endoplasmic reticulum. In terms of biological role, component of the large ribosomal subunit. The ribosome is a large ribonucleoprotein complex responsible for the synthesis of proteins in the cell. This is Large ribosomal subunit protein eL18 (Rpl18) from Mus musculus (Mouse).